Here is a 394-residue protein sequence, read N- to C-terminus: Chalcone synthase 2 (394 aa).

Residue Cys-167 is part of the active site.

The protein belongs to the thiolase-like superfamily. Chalcone/stilbene synthases family.

It carries out the reaction (E)-4-coumaroyl-CoA + 3 malonyl-CoA + 3 H(+) = 2',4,4',6'-tetrahydroxychalcone + 3 CO2 + 4 CoA. Its pathway is secondary metabolite biosynthesis; flavonoid biosynthesis. Its function is as follows. The primary product of this enzyme is 4,2',4',6'-tetrahydroxychalcone (also termed naringenin-chalcone or chalcone) which can under specific conditions spontaneously isomerize into naringenin. The sequence is that of Chalcone synthase 2 (CHS2) from Secale cereale (Rye).